The primary structure comprises 358 residues: Photosystem II protein D1 (358 aa).

Helical transmembrane passes span 29 to 46 (YVGW…AATI), 116 to 131 (HFLI…QWEL), and 140 to 154 (WICV…AATS). Chlorophyll a is bound at residue histidine 116. A pheophytin a-binding site is contributed by tryptophan 124. Positions 168 and 187 each coordinate [CaMn4O5] cluster. The chain crosses the membrane as a helical span at residues 195-216 (FHQLGVAGVFGGSLFCAMHGSL). Histidine 196 provides a ligand contact to chlorophyll a. A quinone contacts are provided by residues histidine 213 and 262 to 263 (SF). Histidine 213 contributes to the Fe cation binding site. A Fe cation-binding site is contributed by histidine 270. The chain crosses the membrane as a helical span at residues 272-286 (FLAAWPVVCIWFTAL). [CaMn4O5] cluster-binding residues include histidine 330, glutamate 331, aspartate 340, and alanine 342. The propeptide occupies 343 to 358 (AGEVLPIALQSPAING).

This sequence belongs to the reaction center PufL/M/PsbA/D family. As to quaternary structure, PSII is composed of 1 copy each of membrane proteins PsbA, PsbB, PsbC, PsbD, PsbE, PsbF, PsbH, PsbI, PsbJ, PsbK, PsbL, PsbM, PsbT, PsbX, PsbY, PsbZ, Psb30/Ycf12, peripheral proteins PsbO, CyanoQ (PsbQ), PsbU, PsbV and a large number of cofactors. It forms dimeric complexes. It depends on The D1/D2 heterodimer binds P680, chlorophylls that are the primary electron donor of PSII, and subsequent electron acceptors. It shares a non-heme iron and each subunit binds pheophytin, quinone, additional chlorophylls, carotenoids and lipids. D1 provides most of the ligands for the Mn4-Ca-O5 cluster of the oxygen-evolving complex (OEC). There is also a Cl(-1) ion associated with D1 and D2, which is required for oxygen evolution. The PSII complex binds additional chlorophylls, carotenoids and specific lipids. as a cofactor. Tyr-159 forms a radical intermediate that is referred to as redox-active TyrZ, YZ or Y-Z. Post-translationally, C-terminally processed by CtpA; processing is essential to allow assembly of the oxygen-evolving complex and thus photosynthetic growth.

The protein resides in the cellular thylakoid membrane. It carries out the reaction 2 a plastoquinone + 4 hnu + 2 H2O = 2 a plastoquinol + O2. Photosystem II (PSII) is a light-driven water:plastoquinone oxidoreductase that uses light energy to abstract electrons from H(2)O, generating O(2) and a proton gradient subsequently used for ATP formation. It consists of a core antenna complex that captures photons, and an electron transfer chain that converts photonic excitation into a charge separation. The D1/D2 (PsbA/PsbD) reaction center heterodimer binds P680, the primary electron donor of PSII as well as several subsequent electron acceptors. This Mastigocladus laminosus (Fischerella sp.) protein is Photosystem II protein D1.